The chain runs to 277 residues: Putative thiosulfate sulfurtransferase (277 aa).

Rhodanese domains are found at residues 18-125 and 154-274; these read HAPK…PLSS and AINV…APIE. Cysteine 233 acts as the Cysteine persulfide intermediate in catalysis. Arginine 238 contacts substrate.

It catalyses the reaction thiosulfate + hydrogen cyanide = thiocyanate + sulfite + 2 H(+). Functionally, may be a sulfotransferase involved in the formation of thiosulfate. This chain is Putative thiosulfate sulfurtransferase (cysA1), found in Mycobacterium tuberculosis (strain CDC 1551 / Oshkosh).